The chain runs to 200 residues: Protein GrpE (200 aa).

Over residues M1–N25 the composition is skewed to basic and acidic residues. The disordered stretch occupies residues M1–E52.

It belongs to the GrpE family. In terms of assembly, homodimer.

It is found in the cytoplasm. Functionally, participates actively in the response to hyperosmotic and heat shock by preventing the aggregation of stress-denatured proteins, in association with DnaK and GrpE. It is the nucleotide exchange factor for DnaK and may function as a thermosensor. Unfolded proteins bind initially to DnaJ; upon interaction with the DnaJ-bound protein, DnaK hydrolyzes its bound ATP, resulting in the formation of a stable complex. GrpE releases ADP from DnaK; ATP binding to DnaK triggers the release of the substrate protein, thus completing the reaction cycle. Several rounds of ATP-dependent interactions between DnaJ, DnaK and GrpE are required for fully efficient folding. The protein is Protein GrpE of Legionella pneumophila subsp. pneumophila (strain Philadelphia 1 / ATCC 33152 / DSM 7513).